The sequence spans 162 residues: UPF0460 protein y4vQ (162 aa).

The protein belongs to the UPF0460 family.

The sequence is that of UPF0460 protein y4vQ from Sinorhizobium fredii (strain NBRC 101917 / NGR234).